The primary structure comprises 245 residues: Oncostatin-M (245 aa).

An N-terminal signal peptide occupies residues 1–26; sequence MGAQRMQRTLLSLVLRLLLLCTVATG. 2 disulfides stabilise this stretch: cysteine 28/cysteine 135 and cysteine 71/cysteine 177. Asparagine 97 is a glycosylation site (N-linked (GlcNAc...) asparagine). Disordered regions lie at residues 143–171 and 197–245; these read SSDP…STFQ and WGER…APAR. Residues 153–166 are compositionally biased toward pro residues; that stretch reads QPGPGPTPLPPTPP. The segment covering 203–218 has biased composition (basic residues); it reads RSRRHSPCRALKRGAR. A propeptide spanning residues 207 to 245 is cleaved from the precursor; sequence HSPCRALKRGARRTQPFPEIRRLAPRGQPPGSLWGAPAR.

It belongs to the LIF/OSM family. Propeptide processing is not important for receptor binding activity but may be important growth-inhibitory activity.

Its subcellular location is the secreted. Functionally, growth regulator. Inhibits the proliferation of a number of tumor cell lines. It regulates cytokine production, including IL-6, G-CSF and GM-CSF from endothelial cells. Uses both type I OSM receptor (heterodimers composed of LIFR and IL6ST) and type II OSM receptor (heterodimers composed of OSMR and IL6ST). Involved in the maturation of fetal hepatocytes, thereby promoting liver development and regeneration. The chain is Oncostatin-M (OSM) from Bos taurus (Bovine).